The chain runs to 122 residues: uncharacterized protein (122 aa).

A coiled-coil region spans residues 46-116 (KDLQKEVDDL…HQLENKRELN (71 aa)).

This is an uncharacterized protein from Invertebrate iridescent virus 6 (IIV-6).